The following is a 324-amino-acid chain: Acetyl-coenzyme A carboxylase carboxyl transferase subunit alpha (324 aa).

Residues 37-291 (KLDKRLDRLK…QEYVLQEWLK (255 aa)) form the CoA carboxyltransferase C-terminal domain.

It belongs to the AccA family. In terms of assembly, acetyl-CoA carboxylase is a heterohexamer composed of biotin carboxyl carrier protein (AccB), biotin carboxylase (AccC) and two subunits each of ACCase subunit alpha (AccA) and ACCase subunit beta (AccD).

Its subcellular location is the cytoplasm. It catalyses the reaction N(6)-carboxybiotinyl-L-lysyl-[protein] + acetyl-CoA = N(6)-biotinyl-L-lysyl-[protein] + malonyl-CoA. The protein operates within lipid metabolism; malonyl-CoA biosynthesis; malonyl-CoA from acetyl-CoA: step 1/1. In terms of biological role, component of the acetyl coenzyme A carboxylase (ACC) complex. First, biotin carboxylase catalyzes the carboxylation of biotin on its carrier protein (BCCP) and then the CO(2) group is transferred by the carboxyltransferase to acetyl-CoA to form malonyl-CoA. The protein is Acetyl-coenzyme A carboxylase carboxyl transferase subunit alpha of Chlamydia trachomatis serovar D (strain ATCC VR-885 / DSM 19411 / UW-3/Cx).